Consider the following 289-residue polypeptide: ATP synthase gamma chain (289 aa).

This sequence belongs to the ATPase gamma chain family. F-type ATPases have 2 components, CF(1) - the catalytic core - and CF(0) - the membrane proton channel. CF(1) has five subunits: alpha(3), beta(3), gamma(1), delta(1), epsilon(1). CF(0) has three main subunits: a, b and c.

The protein resides in the cell membrane. Produces ATP from ADP in the presence of a proton gradient across the membrane. The gamma chain is believed to be important in regulating ATPase activity and the flow of protons through the CF(0) complex. The protein is ATP synthase gamma chain of Lactococcus lactis subsp. lactis (strain IL1403) (Streptococcus lactis).